Reading from the N-terminus, the 570-residue chain is MDFLRTSLIVGLLVVSYLLVLEWNEDMSPQQQPVAQTPSVTIDSNGADSSALLNSPNTGELDTPETASKPATAEDSNISSTASSGKIITVITDVLRVEIDLNGGNVVEASLLQYPISLKNPTPLDLMQKNNGVYYVAASSLIGANGFDDSKNGGNPIYIAEKNSYSLQEGQDKLSVDLRTERDGVTIVKRYEFEKSSYSINVNFQINNQSDAPWKANFSAKLVRDKSPDPTFSGGFGAASFLGAVVSTPEKPYEKIDFSDMEESGPSGVKVNSSNGWIAFIQHYFVSAWIPLSNDTHTYQTRLRNGLYLMGFVDPEFTVEPGQTHNVGAKLYAGPKIMETLKEVAPNLDLTVDFGWLWLIAKPLYLVLEFIHDYVGNWGIAIILLTVLIKALFFHLSATSYRSMANMRRVTPEMQRIREQYGDDRQRMSQAMMELYKKEKINPLGGCLPMLVQMPVFISLYWVLLESVQLRQAPFFFWIQDLSIKDPYFVLPLLMGAAMFLQTSLNPTPPDPIQARVMKMMPIIFTVFFLWFPAGLVLYWLVNNILSIAQQWYITKKIENGGLAAKKIAS.

Positions Gln-31 to Glu-60 are enriched in polar residues. The disordered stretch occupies residues Gln-31–Ser-79. 5 consecutive transmembrane segments (helical) span residues Pro-230 to Glu-250, Trp-378 to Ala-398, Leu-444 to Leu-464, Pro-487 to Pro-507, and Pro-522 to Val-542.

Belongs to the OXA1/ALB3/YidC family. Type 1 subfamily. In terms of assembly, interacts with the Sec translocase complex via SecD. Specifically interacts with transmembrane segments of nascent integral membrane proteins during membrane integration.

The protein resides in the cell inner membrane. In terms of biological role, required for the insertion and/or proper folding and/or complex formation of integral membrane proteins into the membrane. Involved in integration of membrane proteins that insert both dependently and independently of the Sec translocase complex, as well as at least some lipoproteins. Aids folding of multispanning membrane proteins. This chain is Membrane protein insertase YidC, found in Hahella chejuensis (strain KCTC 2396).